The chain runs to 508 residues: UTP--glucose-1-phosphate uridylyltransferase (508 aa).

Ser13 carries the post-translational modification Phosphoserine. UTP is bound by residues 113-116, Lys127, Gln190, and Gly222; that span reads LNGG. 115–116 is a binding site for substrate; that stretch reads GG. Lys127 lines the Mg(2+) pocket. Substrate contacts are provided by residues His223 and 251–253; that span reads NID. UTP is bound by residues Asp253 and Lys396. Residue Asp253 participates in Mg(2+) binding. The active site involves Lys396. Thr426 bears the Phosphothreonine mark. Ser434 is modified (phosphoserine). N6-acetyllysine is present on Lys438. Ser448 and Ser461 each carry phosphoserine. The tract at residues 457–508 is oligomerization; that stretch reads HLTVSGDVTFGKNVSLKGTVIIIANHGDRIDIPPGAVLENKIVSGNLRILDH. The critical for end-to-end subunit interaction stretch occupies residues 502–503; the sequence is NL.

The protein belongs to the UDPGP type 1 family. In terms of assembly, homooctamer.

The protein localises to the cytoplasm. The catalysed reaction is alpha-D-glucose 1-phosphate + UTP + H(+) = UDP-alpha-D-glucose + diphosphate. Its pathway is glycan biosynthesis; glycogen biosynthesis. Functionally, UTP--glucose-1-phosphate uridylyltransferase catalyzing the conversion of glucose-1-phosphate into UDP-glucose, a crucial precursor for the production of glycogen. The polypeptide is UTP--glucose-1-phosphate uridylyltransferase (UGP2) (Cricetulus griseus (Chinese hamster)).